A 91-amino-acid polypeptide reads, in one-letter code: YcgL domain-containing protein ESA_01460 (91 aa).

The YcgL domain occupies 1 to 85 (MFCVIYRSAR…PPENLLKQHL (85 aa)).

The protein is YcgL domain-containing protein ESA_01460 of Cronobacter sakazakii (strain ATCC BAA-894) (Enterobacter sakazakii).